The sequence spans 555 residues: Formate--tetrahydrofolate ligase (555 aa).

65 to 72 (TPAGEGKT) provides a ligand contact to ATP.

The protein belongs to the formate--tetrahydrofolate ligase family.

It carries out the reaction (6S)-5,6,7,8-tetrahydrofolate + formate + ATP = (6R)-10-formyltetrahydrofolate + ADP + phosphate. It participates in one-carbon metabolism; tetrahydrofolate interconversion. This Paracoccus denitrificans (strain Pd 1222) protein is Formate--tetrahydrofolate ligase.